A 94-amino-acid chain; its full sequence is Large ribosomal subunit protein bL27 (94 aa).

The propeptide occupies Met-1–Phe-9.

This sequence belongs to the bacterial ribosomal protein bL27 family. In terms of processing, the N-terminus is cleaved by ribosomal processing cysteine protease Prp.

This Halalkalibacterium halodurans (strain ATCC BAA-125 / DSM 18197 / FERM 7344 / JCM 9153 / C-125) (Bacillus halodurans) protein is Large ribosomal subunit protein bL27.